Here is a 303-residue protein sequence, read N- to C-terminus: Hydroxyacylglutathione hydrolase, mitochondrial (303 aa).

Zn(2+) contacts are provided by His-97, His-99, Asp-101, His-102, His-153, and Asp-177. Substrate is bound by residues 186-188 (KFF), 216-218 (HEY), and 292-295 (RKEK). Position 216 (His-216) interacts with Zn(2+).

It belongs to the metallo-beta-lactamase superfamily. Glyoxalase II family. In terms of assembly, monomer. Zn(2+) is required as a cofactor.

Its subcellular location is the mitochondrion matrix. The protein localises to the cytoplasm. The enzyme catalyses an S-(2-hydroxyacyl)glutathione + H2O = a 2-hydroxy carboxylate + glutathione + H(+). It carries out the reaction (R)-S-lactoylglutathione + H2O = (R)-lactate + glutathione + H(+). Thiolesterase that catalyzes the hydrolysis of S-D-lactoyl-glutathione to form glutathione and D-lactic acid. The polypeptide is Hydroxyacylglutathione hydrolase, mitochondrial (hagh) (Danio rerio (Zebrafish)).